A 361-amino-acid polypeptide reads, in one-letter code: Alanine racemase (361 aa).

K35 acts as the Proton acceptor; specific for D-alanine in catalysis. The residue at position 35 (K35) is an N6-(pyridoxal phosphate)lysine. A substrate-binding site is contributed by R130. The active-site Proton acceptor; specific for L-alanine is the Y257. M305 is a substrate binding site.

Belongs to the alanine racemase family. The cofactor is pyridoxal 5'-phosphate.

The catalysed reaction is L-alanine = D-alanine. It functions in the pathway amino-acid biosynthesis; D-alanine biosynthesis; D-alanine from L-alanine: step 1/1. Functionally, catalyzes the interconversion of L-alanine and D-alanine. May also act on other amino acids. This Nitrosomonas eutropha (strain DSM 101675 / C91 / Nm57) protein is Alanine racemase (alr).